We begin with the raw amino-acid sequence, 764 residues long: 5-methyltetrahydropteroyltriglutamate--homocysteine methyltransferase (764 aa).

Residues 16-19 and Lys115 each bind 5-methyltetrahydropteroyltri-L-glutamate; that span reads RELK. L-homocysteine contacts are provided by residues 435–437 and Glu488; that span reads IGS. L-methionine-binding positions include 435–437 and Glu488; that span reads IGS. Residues 519 to 520 and Trp565 each bind 5-methyltetrahydropteroyltri-L-glutamate; that span reads RC. Asp603 serves as a coordination point for L-homocysteine. Asp603 is an L-methionine binding site. Glu609 contacts 5-methyltetrahydropteroyltri-L-glutamate. Residues His645, Cys647, and Glu669 each coordinate Zn(2+). His698 acts as the Proton donor in catalysis. A Zn(2+)-binding site is contributed by Cys730.

This sequence belongs to the vitamin-B12 independent methionine synthase family. Zn(2+) is required as a cofactor.

It carries out the reaction 5-methyltetrahydropteroyltri-L-glutamate + L-homocysteine = tetrahydropteroyltri-L-glutamate + L-methionine. Its pathway is amino-acid biosynthesis; L-methionine biosynthesis via de novo pathway; L-methionine from L-homocysteine (MetE route): step 1/1. Functionally, catalyzes the transfer of a methyl group from 5-methyltetrahydrofolate to homocysteine resulting in methionine formation. The chain is 5-methyltetrahydropteroyltriglutamate--homocysteine methyltransferase from Burkholderia thailandensis (strain ATCC 700388 / DSM 13276 / CCUG 48851 / CIP 106301 / E264).